The chain runs to 417 residues: Hydroxysqualene dehydroxylase (417 aa).

The protein belongs to the HpnE family.

The catalysed reaction is squalene + FAD + H2O + H(+) = hydroxysqualene + FADH2. The protein operates within secondary metabolite biosynthesis; hopanoid biosynthesis. Its function is as follows. Involved in the biosynthesis of the hopanoid precursor squalene (SQ) from farnesyl diphosphate (FPP). Catalyzes the third (last) step, the reduction of hydroxysqualene (HSQ) to SQ. This Sinorhizobium fredii (strain NBRC 101917 / NGR234) protein is Hydroxysqualene dehydroxylase.